A 310-amino-acid chain; its full sequence is Olfactory receptor 8B8 (310 aa).

The Extracellular segment spans residues 1-27 (MATENASVPEFILAGLTDQPGLRMPLF). Asparagine 5 carries an N-linked (GlcNAc...) asparagine glycan. The chain crosses the membrane as a helical span at residues 28 to 48 (FLFLGFYMVTMVGNLGLITLI). The Cytoplasmic segment spans residues 49–55 (GLNSHLH). Residues 56–76 (TPMYFFLFNLSLIDFCYSTVI) form a helical membrane-spanning segment. The Extracellular portion of the chain corresponds to 77–98 (TPKMLVSFVSKKNIISYSGCMT). Cysteines 96 and 188 form a disulfide. Residues 99 to 119 (QLFFFLFFVVSESFILSAMAY) traverse the membrane as a helical segment. Over 120–140 (DRYVAICNPLMYTVTMSPQVC) the chain is Cytoplasmic. A helical membrane pass occupies residues 141 to 161 (LLLLLGVYVMGFAGAMAHTAF). Residues 162–195 (MVKLTFCADKLVNHYMCDILPLLERSCTSTYVNE) lie on the Extracellular side of the membrane. A helical transmembrane segment spans residues 196-216 (LVVFIVVGIDIGVPTVTIFIS). Residues 217–238 (YALILSSILRISSTEGRSKAFS) are Cytoplasmic-facing. Residues 239–259 (TCSSHIIAVSLFFGSGAFMYL) form a helical membrane-spanning segment. Residues 260-270 (KPSSLLPMNQG) lie on the Extracellular side of the membrane. A helical membrane pass occupies residues 271–291 (KVSSLFYTIVVPMLNPLIYSL). The Cytoplasmic segment spans residues 292 to 310 (RNKDVKVALRKTLSRSSFS).

Belongs to the G-protein coupled receptor 1 family.

It is found in the cell membrane. In terms of biological role, odorant receptor. This chain is Olfactory receptor 8B8, found in Mus musculus (Mouse).